Reading from the N-terminus, the 127-residue chain is Glycine cleavage system H protein (127 aa).

A Lipoyl-binding domain is found at 23 to 105 (KVSVGITDFA…YGEGWIAVIE (83 aa)). K64 bears the N6-lipoyllysine mark.

This sequence belongs to the GcvH family. In terms of assembly, the glycine cleavage system is composed of four proteins: P, T, L and H. It depends on (R)-lipoate as a cofactor.

Functionally, the glycine cleavage system catalyzes the degradation of glycine. The H protein shuttles the methylamine group of glycine from the P protein to the T protein. In Coprothermobacter proteolyticus (strain ATCC 35245 / DSM 5265 / OCM 4 / BT), this protein is Glycine cleavage system H protein.